The chain runs to 100 residues: Small ribosomal subunit protein uS14c (100 aa).

This sequence belongs to the universal ribosomal protein uS14 family. As to quaternary structure, part of the 30S ribosomal subunit.

It is found in the plastid. Its subcellular location is the chloroplast. Its function is as follows. Binds 16S rRNA, required for the assembly of 30S particles. The polypeptide is Small ribosomal subunit protein uS14c (Anthoceros angustus (Hornwort)).